Reading from the N-terminus, the 319-residue chain is Acetyl-coenzyme A carboxylase carboxyl transferase subunit alpha (319 aa).

In terms of domain architecture, CoA carboxyltransferase C-terminal spans 35 to 296 (DLDKEIKQLE…KQRLIEQLNE (262 aa)).

This sequence belongs to the AccA family. Acetyl-CoA carboxylase is a heterohexamer composed of biotin carboxyl carrier protein (AccB), biotin carboxylase (AccC) and two subunits each of ACCase subunit alpha (AccA) and ACCase subunit beta (AccD).

Its subcellular location is the cytoplasm. It catalyses the reaction N(6)-carboxybiotinyl-L-lysyl-[protein] + acetyl-CoA = N(6)-biotinyl-L-lysyl-[protein] + malonyl-CoA. It participates in lipid metabolism; malonyl-CoA biosynthesis; malonyl-CoA from acetyl-CoA: step 1/1. In terms of biological role, component of the acetyl coenzyme A carboxylase (ACC) complex. First, biotin carboxylase catalyzes the carboxylation of biotin on its carrier protein (BCCP) and then the CO(2) group is transferred by the carboxyltransferase to acetyl-CoA to form malonyl-CoA. The sequence is that of Acetyl-coenzyme A carboxylase carboxyl transferase subunit alpha from Aliivibrio salmonicida (strain LFI1238) (Vibrio salmonicida (strain LFI1238)).